The chain runs to 585 residues: Formate--tetrahydrofolate ligase (585 aa).

ATP is bound at residue 65–72 (TPHGEGKT).

Belongs to the formate--tetrahydrofolate ligase family.

It carries out the reaction (6S)-5,6,7,8-tetrahydrofolate + formate + ATP = (6R)-10-formyltetrahydrofolate + ADP + phosphate. Its pathway is one-carbon metabolism; tetrahydrofolate interconversion. This is Formate--tetrahydrofolate ligase from Shewanella baltica (strain OS195).